A 228-amino-acid chain; its full sequence is Geranylgeranylglyceryl phosphate synthase (228 aa).

K13 serves as a coordination point for sn-glycerol 1-phosphate. Mg(2+)-binding residues include D15 and T41. Sn-glycerol 1-phosphate-binding positions include 159 to 164 (YVEYSG), G189, and 209 to 210 (GN).

It belongs to the GGGP/HepGP synthase family. Group I subfamily. Mg(2+) serves as cofactor.

The protein localises to the cytoplasm. It catalyses the reaction sn-glycerol 1-phosphate + (2E,6E,10E)-geranylgeranyl diphosphate = sn-3-O-(geranylgeranyl)glycerol 1-phosphate + diphosphate. Its pathway is membrane lipid metabolism; glycerophospholipid metabolism. In terms of biological role, prenyltransferase that catalyzes the transfer of the geranylgeranyl moiety of geranylgeranyl diphosphate (GGPP) to the C3 hydroxyl of sn-glycerol-1-phosphate (G1P). This reaction is the first ether-bond-formation step in the biosynthesis of archaeal membrane lipids. This is Geranylgeranylglyceryl phosphate synthase from Methanosphaerula palustris (strain ATCC BAA-1556 / DSM 19958 / E1-9c).